The following is a 266-amino-acid chain: MSNFQAALLLTLLAGLSTGIGSAMALAVRHTNKRFLALSLGFSAGIMLYVSFMEIIPQSQEALSAGLSAKAGAWVSTISFFGGMLFTWAIDQMVPSFENPHEMSMIGPMTDAEKSDTRLHRMGIFTAAAIAIHNFPEGMAVFFSALSNQELGIVIASTIALHNIPEGMAVAVPIYFATKSRKRAFSLSFLSGLAEPLGALVGYTLLRPFLTPFVLGIVLASVSGIMVYISLDELLPSAEEYGEHHLAITGLIAGMAVMALSLLLLT.

The next 8 membrane-spanning stretches (helical) occupy residues 8–28, 36–56, 71–91, 123–143, 152–172, 185–205, 209–229, and 246–266; these read LLLTLLAGLSTGIGSAMALAV, LALSLGFSAGIMLYVSFMEII, AGAWVSTISFFGGMLFTWAID, GIFTAAAIAIHNFPEGMAVFF, GIVIASTIALHNIPEGMAVAV, FSLSFLSGLAEPLGALVGYTL, FLTPFVLGIVLASVSGIMVYI, and LAITGLIAGMAVMALSLLLLT. Residues N134 and E137 each coordinate Fe(2+). Residues E137 and H162 each contribute to the Zn(2+) site. Fe(2+)-binding residues include N163, E166, and E195. E166 contributes to the Zn(2+) binding site.

The protein belongs to the ZIP transporter (TC 2.A.5) family. ZupT subfamily.

The protein resides in the cell inner membrane. It catalyses the reaction Zn(2+)(in) = Zn(2+)(out). In terms of biological role, mediates zinc uptake. May also transport other divalent cations. This is Zinc transporter ZupT from Chlorobium luteolum (strain DSM 273 / BCRC 81028 / 2530) (Pelodictyon luteolum).